The sequence spans 355 residues: Guanine nucleotide-binding protein G(i) subunit alpha-2 (355 aa).

G2 carries N-myristoyl glycine lipidation. Residue C3 is the site of S-palmitoyl cysteine attachment. Residues 32-355 (REVKLLLLGA…KNNLKDCGLF (324 aa)) form the G-alpha domain. The tract at residues 35-48 (KLLLLGAGESGKST) is G1 motif. Residues 40–47 (GAGESGKS), 176–182 (LRTRVKT), 201–205 (DVGGQ), 270–273 (NKKD), and A327 each bind GTP. S47 and T182 together coordinate Mg(2+). Residues 174–182 (DVLRTRVKT) are G2 motif. Residues 197–206 (FKMFDVGGQR) form a G3 motif region. The interval 266-273 (ILFLNKKD) is G4 motif. Positions 325-330 (TCATDT) are G5 motif.

Belongs to the G-alpha family. G(i/o/t/z) subfamily. As to quaternary structure, g proteins are composed of 3 units; alpha, beta and gamma. The alpha chain contains the guanine nucleotide binding site.

It localises to the cytoplasm. Its subcellular location is the cytoskeleton. The protein localises to the microtubule organizing center. The protein resides in the centrosome. It is found in the cell membrane. Guanine nucleotide-binding proteins (G proteins) are involved as modulators or transducers in various transmembrane signaling systems. The G(i) proteins are involved in hormonal regulation of adenylate cyclase: they inhibit the cyclase in response to beta-adrenergic stimuli. May play a role in cell division. In Oryzias latipes (Japanese rice fish), this protein is Guanine nucleotide-binding protein G(i) subunit alpha-2 (gnai2).